Reading from the N-terminus, the 655-residue chain is Broad substrate specificity ATP-binding cassette transporter ABCG2 (655 aa).

Residues 1 to 395 (MSSSNVEVFI…KNLLGNPQAS (395 aa)) lie on the Cytoplasmic side of the membrane. The ABC transporter domain occupies 37 to 286 (LSFHNICYRV…FESAGYHCEA (250 aa)). ATP is bound by residues 80 to 87 (GPTGGGKS), 184 to 190 (RGVSGGE), Glu-211, and His-243. A Phosphothreonine; by PIM1 modification is found at Thr-362. The ABC transmembrane type-2 domain maps to 389-651 (LGNPQASIAQ…TIAYLKLLFL (263 aa)). Residues 396 to 416 (IAQIIVTVVLGLVIGAIYFGL) form a helical membrane-spanning segment. Topologically, residues 417–428 (KNDSTGIQNRAG) are extracellular. Residues 429–449 (VLFFLTTNQCFSSVSAVELFV) form a helical membrane-spanning segment. Residues 450 to 477 (VEKKLFIHEYISGYYRVSSYFLGKLLSD) lie on the Cytoplasmic side of the membrane. Residues 478–498 (LLPMRMLPSIIFTCIVYFMLG) form a helical membrane-spanning segment. The Extracellular segment spans residues 499-506 (LKPKADAF). The helical transmembrane segment at 507–527 (FVMMFTLMMVAYSASSMALAI) threads the bilayer. At 528 to 535 (AAGQSVVS) the chain is on the cytoplasmic side. Residues 536-556 (VATLLMTICFVFMMIFSGLLV) traverse the membrane as a helical segment. Residues 557-630 (NLTTIASWLS…LSPWGLWKNH (74 aa)) lie on the Extracellular side of the membrane. Cys-592 and Cys-608 form a disulfide bridge. The N-linked (GlcNAc...) asparagine glycan is linked to Asn-596. A helical membrane pass occupies residues 631–651 (VALACMIVIFLTIAYLKLLFL). At 652–655 (KKYS) the chain is on the cytoplasmic side.

The protein belongs to the ABC transporter superfamily. ABCG family. Eye pigment precursor importer (TC 3.A.1.204) subfamily. In terms of assembly, homodimer; disulfide-linked. The minimal functional unit is a homodimer, but the major oligomeric form in plasma membrane is a homotetramer with possibility of higher order oligomerization up to homododecamers. N-glycosylated. Glycosylation-deficient ABCG2 is normally expressed and functional. Post-translationally, phosphorylated. Phosphorylation at Thr-362 by PIM1 is induced by drugs like mitoxantrone and is associated with cells increased drug resistance. It regulates the localization to the plasma membrane, the homooligomerization and therefore, the activity of the transporter. As to expression, highly expressed in placenta. Low expression in small intestine, liver and colon. Expressed in brain (at protein level).

Its subcellular location is the cell membrane. It localises to the apical cell membrane. It is found in the mitochondrion membrane. It catalyses the reaction ATP + H2O + xenobioticSide 1 = ADP + phosphate + xenobioticSide 2.. The catalysed reaction is urate(in) + ATP + H2O = urate(out) + ADP + phosphate + H(+). It carries out the reaction indoxyl sulfate(in) + ATP + H2O = indoxyl sulfate(out) + ADP + phosphate + H(+). The enzyme catalyses sphing-4-enine 1-phosphate(in) + ATP + H2O = sphing-4-enine 1-phosphate(out) + ADP + phosphate + H(+). It catalyses the reaction estrone 3-sulfate(in) + ATP + H2O = estrone 3-sulfate(out) + ADP + phosphate + H(+). The catalysed reaction is dehydroepiandrosterone 3-sulfate(in) + ATP + H2O = dehydroepiandrosterone 3-sulfate(out) + ADP + phosphate + H(+). It carries out the reaction 4-methylumbelliferone sulfate(in) + ATP + H2O = 4-methylumbelliferone sulfate(out) + ADP + phosphate + H(+). The enzyme catalyses 5,7-dimethyl-2-methylamino-4-(3-pyridylmethyl)-1,3-benzothiazol-6-yl beta-D-glucuronate(in) + ATP + H2O = 5,7-dimethyl-2-methylamino-4-(3-pyridylmethyl)-1,3-benzothiazol-6-yl beta-D-glucuronate(out) + ADP + phosphate + H(+). It catalyses the reaction 4-methylumbelliferone beta-D-glucuronate(in) + ATP + H2O = 4-methylumbelliferone beta-D-glucuronate(out) + ADP + phosphate + H(+). The catalysed reaction is 5,7-dimethyl-2-methylamino-4-(3-pyridylmethyl)-1,3-benzothiazol-6-yl sulfate(in) + ATP + H2O = 5,7-dimethyl-2-methylamino-4-(3-pyridylmethyl)-1,3-benzothiazol-6-yl sulfate(out) + ADP + phosphate + H(+). It carries out the reaction 17beta-estradiol 17-O-(beta-D-glucuronate)(in) + ATP + H2O = 17beta-estradiol 17-O-(beta-D-glucuronate)(out) + ADP + phosphate + H(+). The enzyme catalyses methotrexate(in) + ATP + H2O = methotrexate(out) + ADP + phosphate + H(+). It catalyses the reaction riboflavin(in) + ATP + H2O = riboflavin(out) + ADP + phosphate + H(+). The catalysed reaction is pheophorbide a(in) + ATP + H2O = pheophorbide a(out) + ADP + phosphate + H(+). It carries out the reaction itaconate(in) + ATP + H2O = itaconate(out) + ADP + phosphate + H(+). With respect to regulation, specifically inhibited by the fungal toxin fumitremorgin C and Ko143. In terms of biological role, broad substrate specificity ATP-dependent transporter of the ATP-binding cassette (ABC) family that actively extrudes a wide variety of physiological compounds, dietary toxins and xenobiotics from cells. Involved in porphyrin homeostasis, mediating the export of protoporphyrin IX (PPIX) from both mitochondria to cytosol and cytosol to extracellular space, it also functions in the cellular export of heme. Also mediates the efflux of sphingosine-1-P from cells. Acts as a urate exporter functioning in both renal and extrarenal urate excretion. In kidney, it also functions as a physiological exporter of the uremic toxin indoxyl sulfate. Also involved in the excretion of steroids like estrone 3-sulfate/E1S, 3beta-sulfooxy-androst-5-en-17-one/DHEAS, and other sulfate conjugates. Mediates the secretion of the riboflavin and biotin vitamins into milk. Extrudes pheophorbide a, a phototoxic porphyrin catabolite of chlorophyll, reducing its bioavailability. Plays an important role in the exclusion of xenobiotics from the brain. It confers to cells a resistance to multiple drugs and other xenobiotics including mitoxantrone, pheophorbide, camptothecin, methotrexate, azidothymidine, and the anthracyclines daunorubicin and doxorubicin, through the control of their efflux. In placenta, it limits the penetration of drugs from the maternal plasma into the fetus. May play a role in early stem cell self-renewal by blocking differentiation. In inflammatory macrophages, exports itaconate from the cytosol to the extracellular compartment and limits the activation of TFEB-dependent lysosome biogenesis involved in antibacterial innate immune response. The chain is Broad substrate specificity ATP-binding cassette transporter ABCG2 (ABCG2) from Homo sapiens (Human).